Consider the following 320-residue polypeptide: tRNA-cytidine(32) 2-sulfurtransferase (320 aa).

The PP-loop motif motif lies at serine 54–serine 59. Cysteine 129, cysteine 132, and cysteine 220 together coordinate [4Fe-4S] cluster.

Belongs to the TtcA family. As to quaternary structure, homodimer. The cofactor is Mg(2+). [4Fe-4S] cluster serves as cofactor.

The protein localises to the cytoplasm. The enzyme catalyses cytidine(32) in tRNA + S-sulfanyl-L-cysteinyl-[cysteine desulfurase] + AH2 + ATP = 2-thiocytidine(32) in tRNA + L-cysteinyl-[cysteine desulfurase] + A + AMP + diphosphate + H(+). It participates in tRNA modification. Functionally, catalyzes the ATP-dependent 2-thiolation of cytidine in position 32 of tRNA, to form 2-thiocytidine (s(2)C32). The sulfur atoms are provided by the cysteine/cysteine desulfurase (IscS) system. The protein is tRNA-cytidine(32) 2-sulfurtransferase of Bordetella parapertussis (strain 12822 / ATCC BAA-587 / NCTC 13253).